Reading from the N-terminus, the 594-residue chain is DNA polymerase II small subunit (594 aa).

This sequence belongs to the DNA polymerase delta/II small subunit family. As to quaternary structure, heterodimer of a large subunit and a small subunit.

The enzyme catalyses DNA(n) + a 2'-deoxyribonucleoside 5'-triphosphate = DNA(n+1) + diphosphate. It catalyses the reaction Exonucleolytic cleavage in the 3'- to 5'-direction to yield nucleoside 5'-phosphates.. In terms of biological role, possesses two activities: a DNA synthesis (polymerase) and an exonucleolytic activity that degrades single-stranded DNA in the 3' to 5' direction. Has a template-primer preference which is characteristic of a replicative DNA polymerase. The sequence is that of DNA polymerase II small subunit (polB) from Methanocaldococcus jannaschii (strain ATCC 43067 / DSM 2661 / JAL-1 / JCM 10045 / NBRC 100440) (Methanococcus jannaschii).